The following is a 2543-amino-acid chain: Highly reducing polyketide synthase GPY1 (2543 aa).

The Ketosynthase family 3 (KS3) domain occupies 9–435 (REPIAIVSMA…GSTAHAVVEF (427 aa)). Residues C182, H318, and H358 each act as for beta-ketoacyl synthase activity in the active site. Residues 574–881 (TFTGQGAMWS…PFFATMLRNA (308 aa)) are malonyl-CoA:ACP transacylase (MAT) domain. An N-terminal hotdog fold region spans residues 953-1089 (HEILGSRCRG…GRAAVLETSK (137 aa)). The interval 953–1253 (HEILGSRCRG…GLQMDRATSD (301 aa)) is dehydratase (DH) domain. The PKS/mFAS DH domain occupies 953 to 1256 (HEILGSRCRG…MDRATSDDNT (304 aa)). H985 functions as the Proton acceptor; for dehydratase activity in the catalytic mechanism. The C-terminal hotdog fold stretch occupies residues 1103-1256 (MPLKVPLKSY…MDRATSDDNT (154 aa)). D1169 serves as the catalytic Proton donor; for dehydratase activity. Positions 1399 to 1587 (NDLLYRFYEE…LDEWRNELAA (189 aa)) are methyltransferase (CMet) domain. Residues 1830 to 2136 (GILESLTMAQ…IEGTSNKQVV (307 aa)) form an enoyl reductase (ER) domain region. Residues 2161-2335 (TYIITGGLGG…ASSVDLGFVE (175 aa)) are ketoreductase (KR) domain. The Carrier domain occupies 2464-2541 (ALQPFVCTAL…DLSARVSRMI (78 aa)). The residue at position 2501 (S2501) is an O-(pantetheine 4'-phosphoryl)serine.

In terms of biological role, highly reducing polyketide synthase; part of the gene cluster that mediates the biosynthesis of gibepyrone A, a 2H-pyran-2-one metabolite exhibiting a moderate antimicrobial activity against Gram-positive bacteria and yeasts. The highly reducing polyketide synthase GPY1 is sufficient to produce gibepyrone A. GPY1 uses an acetyl-CoA starter unit, three malonyl-CoA extender units, and two SAM-dependent methylations to establish the gibepyrone A carbon backbone, followed by product release upon intramolecular cyclization. The gibepyrone A derivatives gibepyrones B and D are produced by cluster-independent P450 monooxygenases, probably to protect the fungus from the toxic product. In contrast, the formation of gibepyrones E and F from gibepyrone A is a spontaneous process and independent of enzymatic activity. The protein is Highly reducing polyketide synthase GPY1 of Gibberella fujikuroi (strain CBS 195.34 / IMI 58289 / NRRL A-6831) (Bakanae and foot rot disease fungus).